A 31-amino-acid chain; its full sequence is Cyclotide mden-J (31 aa).

Positions 1-31 (GSIPCGESCVYIPCISSIVGCACKSKVCYKN) form a cross-link, cyclopeptide (Gly-Asn). 3 disulfides stabilise this stretch: Cys-5-Cys-21, Cys-9-Cys-23, and Cys-14-Cys-28.

This sequence belongs to the cyclotide family. Bracelet subfamily. This is a cyclic peptide.

Functionally, probably participates in a plant defense mechanism. In Melicytus dentatus (Tree violet), this protein is Cyclotide mden-J.